The following is a 192-amino-acid chain: Ornithine lipid N-methyltransferase (192 aa).

It belongs to the methyltransferase superfamily.

The catalysed reaction is an N(2)-[(3R)-3-(2-saturated-acyloxy)acyl]-L-ornithine lipid + 3 S-adenosyl-L-methionine = an N,N,N-trimethylornithine lipid + 3 S-adenosyl-L-homocysteine + 3 H(+). Its function is as follows. Catalyzes the 3-fold methylation of ornithine lipids. Forms ornithine lipids that are mono-, di-, and trimethylated on the delta-nitrogen of the ornithine head group. The polypeptide is Ornithine lipid N-methyltransferase (Singulisphaera acidiphila (strain ATCC BAA-1392 / DSM 18658 / VKM B-2454 / MOB10)).